Reading from the N-terminus, the 426-residue chain is Serine--tRNA ligase (426 aa).

Position 233–235 (233–235 (TAE)) interacts with L-serine. 264-266 (RSE) is an ATP binding site. Residue Glu-287 participates in L-serine binding. Position 351 to 354 (351 to 354 (EISS)) interacts with ATP. Ser-385 contacts L-serine.

It belongs to the class-II aminoacyl-tRNA synthetase family. Type-1 seryl-tRNA synthetase subfamily. Homodimer. The tRNA molecule binds across the dimer.

The protein localises to the cytoplasm. It catalyses the reaction tRNA(Ser) + L-serine + ATP = L-seryl-tRNA(Ser) + AMP + diphosphate + H(+). It carries out the reaction tRNA(Sec) + L-serine + ATP = L-seryl-tRNA(Sec) + AMP + diphosphate + H(+). It functions in the pathway aminoacyl-tRNA biosynthesis; selenocysteinyl-tRNA(Sec) biosynthesis; L-seryl-tRNA(Sec) from L-serine and tRNA(Sec): step 1/1. Its function is as follows. Catalyzes the attachment of serine to tRNA(Ser). Is also able to aminoacylate tRNA(Sec) with serine, to form the misacylated tRNA L-seryl-tRNA(Sec), which will be further converted into selenocysteinyl-tRNA(Sec). The polypeptide is Serine--tRNA ligase (Brachyspira hyodysenteriae (strain ATCC 49526 / WA1)).